The chain runs to 780 residues: ATP-dependent 6-phosphofructokinase, muscle type (780 aa).

The residue at position 2 (T2) is an N-acetylthreonine. Positions 2–390 are N-terminal catalytic PFK domain 1; the sequence is THEEHHAAKT…NWEVYKLLAH (389 aa). ATP contacts are provided by residues G25, 88–89, and 118–121; these read RC and GDGS. D119 provides a ligand contact to Mg(2+). At S133 the chain carries Phosphoserine. Residues 164–166, R201, 208–210, E264, R292, and 298–301 contribute to the substrate site; these read SID, MGR, and HVQR. The active-site Proton acceptor is the D166. Position 377 is a phosphoserine (S377). An interdomain linker region spans residues 391-401; it reads IRPPVSKSGSH. The tract at residues 402–780 is C-terminal regulatory PFK domain 2; it reads TVAVMNVGAP…SRKRSGEAPA (379 aa). Beta-D-fructose 2,6-bisphosphate-binding positions include R471 and 528 to 532; that span reads TVSNN. S530 carries an O-linked (GlcNAc) serine glycan. An N6-(2-hydroxyisobutyryl)lysine modification is found at K557. Beta-D-fructose 2,6-bisphosphate is bound by residues R566, 573-575, E629, R655, and 661-664; these read MGG and HMQQ. S667 is subject to Phosphoserine. Beta-D-fructose 2,6-bisphosphate is bound at residue R735. At S775 the chain carries Phosphoserine.

It belongs to the phosphofructokinase type A (PFKA) family. ATP-dependent PFK group I subfamily. Eukaryotic two domain clade 'E' sub-subfamily. Homo- and heterotetramers. Phosphofructokinase (PFK) enzyme functions as a tetramer composed of different combinations of 3 types of subunits, called PFKM (M), PFKL (L) and PFKP (P). The composition of the PFK tetramer differs according to the tissue type it is present in. The kinetic and regulatory properties of the tetrameric enzyme are dependent on the subunit composition, hence can vary across tissues. Interacts (via C-terminus) with HK1 (via N-terminal spermatogenic cell-specific region). Mg(2+) is required as a cofactor. In terms of processing, glcNAcylation decreases enzyme activity.

Its subcellular location is the cytoplasm. The catalysed reaction is beta-D-fructose 6-phosphate + ATP = beta-D-fructose 1,6-bisphosphate + ADP + H(+). It participates in carbohydrate degradation; glycolysis; D-glyceraldehyde 3-phosphate and glycerone phosphate from D-glucose: step 3/4. With respect to regulation, allosterically activated by ADP, AMP, or fructose 2,6-bisphosphate, and allosterically inhibited by ATP or citrate. Catalyzes the phosphorylation of D-fructose 6-phosphate to fructose 1,6-bisphosphate by ATP, the first committing step of glycolysis. In Equus caballus (Horse), this protein is ATP-dependent 6-phosphofructokinase, muscle type (PFKM).